The following is a 367-amino-acid chain: MPKKAEAKTGSSSKTTKRTVAKKDVKAEVNETNKTAEKVSSKKVNKTANSVDTNESSSNSTPSTGSKFELSSFKEKVAEIENNILQKIKENPTITGKPFRKLVSVNKLMETGAHIGLTTRKWNPKMKKFIYTKKGNNHIIDLLHTVISLNVAYNFLLDLVKANSNSESSPVLIVGTRGKTIKNHVKEQAKRSHAFYINERWLGGTLTNFSTITKSVAKFNNLILIHKNGEINKYTKKEQVELKKKTEKYAKYFSGIRTMKELPKVIILTDPEINKIAIKEARNLGIPVIAICNTNANPDLVDYVIPANNHSIKSVYLLVGLLCDAVAEAKGLPKAFAEKKDEEILLPEVIKRKPENRRQNNHSFNKN.

The interval 1–68 is disordered; it reads MPKKAEAKTG…NSTPSTGSKF (68 aa). The segment covering 21-40 has biased composition (basic and acidic residues); the sequence is AKKDVKAEVNETNKTAEKVS. The segment covering 53-66 has biased composition (low complexity); the sequence is TNESSSNSTPSTGS.

It belongs to the universal ribosomal protein uS2 family.

This is Small ribosomal subunit protein uS2 from Malacoplasma penetrans (strain HF-2) (Mycoplasma penetrans).